Consider the following 624-residue polypeptide: Fibronectin type III domain-containing protein 2 (624 aa).

A signal peptide spans 1-19 (MREQFSVLVISLLFSSSYG). 5 consecutive Fibronectin type-III domains span residues 131–236 (PPQN…TPDI), 240–330 (EPTN…TDVF), 334–430 (MPRF…TVPT), 431–524 (VPRE…PKRD), and 527–624 (VPPN…WPGR).

As to expression, prismatic layer of shell (at protein level).

The protein resides in the secreted. The protein is Fibronectin type III domain-containing protein 2 of Margaritifera margaritifera (Freshwater pearl mussel).